The chain runs to 113 residues: Colicin-E1* immunity protein (113 aa).

In terms of biological role, this protein is able to protect a cell, which harbors the plasmid pKY-1 encoding colicin E1*, against colicin E1*. This is Colicin-E1* immunity protein (imm) from Shigella sonnei.